A 316-amino-acid polypeptide reads, in one-letter code: Na(+)-translocating NADH-quinone reductase subunit C (316 aa).

The helical transmembrane segment at 13–33 threads the bilayer; it reads WYIILFIFVLSLIAGTLLSSV. Thr280 carries the post-translational modification FMN phosphoryl threonine.

It belongs to the NqrC family. Composed of six subunits; NqrA, NqrB, NqrC, NqrD, NqrE and NqrF. FMN serves as cofactor.

The protein localises to the cell inner membrane. The enzyme catalyses a ubiquinone + n Na(+)(in) + NADH + H(+) = a ubiquinol + n Na(+)(out) + NAD(+). NQR complex catalyzes the reduction of ubiquinone-1 to ubiquinol by two successive reactions, coupled with the transport of Na(+) ions from the cytoplasm to the periplasm. NqrA to NqrE are probably involved in the second step, the conversion of ubisemiquinone to ubiquinol. This is Na(+)-translocating NADH-quinone reductase subunit C from Chlamydia trachomatis serovar D (strain ATCC VR-885 / DSM 19411 / UW-3/Cx).